We begin with the raw amino-acid sequence, 424 residues long: Vasopressin V1a receptor (424 aa).

The disordered stretch occupies residues 1–40 (MSFPRGSQDRSVGNSSPWWPLTTEGSNGSQEAARLGEGDS). Residues 1 to 52 (MSFPRGSQDRSVGNSSPWWPLTTEGSNGSQEAARLGEGDSPLGDVRNEELAK) lie on the Extracellular side of the membrane. Residues 9–30 (DRSVGNSSPWWPLTTEGSNGSQ) show a composition bias toward polar residues. Asn-27 is a glycosylation site (N-linked (GlcNAc...) asparagine). A helical transmembrane segment spans residues 53-76 (LEIAVLAVIFVVAVLGNSSVLLAL). The Cytoplasmic portion of the chain corresponds to 77–88 (HRTPRKTSRMHL). The chain crosses the membrane as a helical span at residues 89-110 (FIRHLSLADLAVAFFQVLPQLC). Topologically, residues 111 to 125 (WDITYRFRGPDWLCR) are extracellular. Cysteines 124 and 205 form a disulfide. Residues 126-147 (VVKHLQVFAMFASAYMLVVMTA) form a helical membrane-spanning segment. At 148–168 (DRYIAVCHPLKTLQQPARRSR) the chain is on the cytoplasmic side. Residues 169 to 190 (LMIATSWVLSFILSTPQYFIFS) traverse the membrane as a helical segment. Residues 191-220 (VIEIEVNNGTKTQDCWATFIQPWGTRAYVT) are Extracellular-facing. Residues 221–241 (WMTSGVFVAPVVVLGTCYGFI) form a helical membrane-spanning segment. Residues 242–299 (CYHIWRNIRGKTASSRHSKGDKGSGEAVGPFHKGLLVTPCVSSVKSISRAKIRTVKMT) are Cytoplasmic-facing. The chain crosses the membrane as a helical span at residues 300-319 (FVIVSAYILCWAPFFIVQMW). The Extracellular segment spans residues 320–337 (SVWDENFIWTDSENPSIT). A helical transmembrane segment spans residues 338–357 (ITALLASLNSCCNPWIYMFF). Residues 358 to 424 (SGHLLQDCVQ…KSIRFIPVST (67 aa)) are Cytoplasmic-facing. Residues Cys-371 and Cys-372 are each lipidated (S-palmitoyl cysteine). The tract at residues 383–416 (DSDSMSRRQTSYSNNRSPTNSTGMWKDSPKSSKS) is disordered. The segment covering 389-405 (RRQTSYSNNRSPTNSTG) has biased composition (polar residues). Ser-410 is modified (phosphoserine).

This sequence belongs to the G-protein coupled receptor 1 family. Vasopressin/oxytocin receptor subfamily. In terms of processing, palmitoylated on three cysteine residues, of which only two are identified. As to expression, localized within gonadotropes of the anterior pituitary of the brain. Broadly distributed throughout the cerebral cortex.

The protein localises to the cell membrane. The protein resides in the cytoplasmic vesicle membrane. In terms of biological role, receptor for arginine vasopressin. The activity of this receptor is mediated by G proteins which activate a phosphatidyl-inositol-calcium second messenger system. Involved in social memory formation. This is Vasopressin V1a receptor (Avpr1a) from Rattus norvegicus (Rat).